The sequence spans 367 residues: THO complex subunit 6 (367 aa).

WD repeat units lie at residues 23-67 (IETR…SQSA), 88-129 (AHEG…ESDV), 157-196 (SPMPEINAMSVDPQSGSVFTAAGDSCAYCWDVESGKIKMT), 199-240 (GHSD…KVIG), 243-283 (DKKS…CVQT), 285-322 (PIPAHVQDVMFDEKQILTVGAEPLLRRFDLNGALLSQI), and 324-363 (CAPCSVFSISLHPAGVVAVGGYGGIVDVISQFGSHLCTFR).

It belongs to the WD repeat THOC6 family. Component of the THO complex, which is composed of THO1, THO2, THO3, THO5, THO6 and THO7. Interacts with ABI5, DDB1A and DWA2.

Its subcellular location is the nucleus. The protein operates within protein modification; protein ubiquitination. Acts as a component of the THO subcomplex of the TREX complex which is thought to couple mRNA transcription, processing and nuclear export. In terms of biological role, component of the CUL4-RBX1-DDB1-DWA1/DWA2 E3 ubiquitin-protein ligase complex that acts as a negative regulator in abscisic acid (ABA) signaling. May function as the substrate recognition module within this complex leading to ABI5 degradation. Functionally redundant with DWA2. The sequence is that of THO complex subunit 6 (THO6) from Arabidopsis thaliana (Mouse-ear cress).